We begin with the raw amino-acid sequence, 637 residues long: 3D-(3,5/4)-trihydroxycyclohexane-1,2-dione hydrolase (637 aa).

Position 66 (glutamate 66) interacts with thiamine diphosphate. Residues 442–522 form a thiamine pyrophosphate binding region; the sequence is SLPGDLQRLW…INVLLFDNSG (81 aa). Mg(2+) contacts are provided by aspartate 493 and asparagine 520.

Belongs to the TPP enzyme family. Requires Mg(2+) as cofactor. Thiamine diphosphate is required as a cofactor.

The catalysed reaction is 3D-3,5/4-trihydroxycyclohexane-1,2-dione + H2O = 5-deoxy-D-glucuronate + H(+). Its pathway is polyol metabolism; myo-inositol degradation into acetyl-CoA; acetyl-CoA from myo-inositol: step 3/7. In terms of biological role, involved in the cleavage of the C1-C2 bond of 3D-(3,5/4)-trihydroxycyclohexane-1,2-dione (THcHDO) to yield 5-deoxy-glucuronate (5DG). In Bacillus subtilis (strain 168), this protein is 3D-(3,5/4)-trihydroxycyclohexane-1,2-dione hydrolase (iolD).